The primary structure comprises 61 residues: Large ribosomal subunit protein uL29 (61 aa).

This sequence belongs to the universal ribosomal protein uL29 family.

The sequence is that of Large ribosomal subunit protein uL29 from Nitratidesulfovibrio vulgaris (strain ATCC 29579 / DSM 644 / CCUG 34227 / NCIMB 8303 / VKM B-1760 / Hildenborough) (Desulfovibrio vulgaris).